The following is a 208-amino-acid chain: NAD(P)H-quinone oxidoreductase subunit I (208 aa).

4Fe-4S ferredoxin-type domains follow at residues 55-84 (GRIH…VDWV) and 95-124 (RNYS…MTEE). [4Fe-4S] cluster contacts are provided by C64, C67, C70, C74, C104, C107, C110, and C114.

Belongs to the complex I 23 kDa subunit family. In terms of assembly, NDH-1 is composed of at least 11 different subunits. [4Fe-4S] cluster is required as a cofactor.

The protein localises to the cellular thylakoid membrane. The enzyme catalyses a plastoquinone + NADH + (n+1) H(+)(in) = a plastoquinol + NAD(+) + n H(+)(out). It carries out the reaction a plastoquinone + NADPH + (n+1) H(+)(in) = a plastoquinol + NADP(+) + n H(+)(out). In terms of biological role, NDH-1 shuttles electrons from an unknown electron donor, via FMN and iron-sulfur (Fe-S) centers, to quinones in the respiratory and/or the photosynthetic chain. The immediate electron acceptor for the enzyme in this species is believed to be plastoquinone. Couples the redox reaction to proton translocation, and thus conserves the redox energy in a proton gradient. This Prochlorococcus marinus subsp. pastoris (strain CCMP1986 / NIES-2087 / MED4) protein is NAD(P)H-quinone oxidoreductase subunit I.